The chain runs to 234 residues: Cytochrome b (234 aa).

Transmembrane regions (helical) follow at residues 33 to 53 (FGSL…FLAM), 77 to 98 (WLIR…YMHV), 113 to 133 (WNIG…GYVL), and 178 to 198 (FFAF…IHLL). Heme b is bound by residues His-83 and His-97. The heme b site is built by His-182 and His-196. Position 201 (His-201) interacts with a ubiquinone. The helical transmembrane segment at 226 to 234 (IKDLLGFLV) threads the bilayer.

The protein belongs to the cytochrome b family. The cytochrome bc1 complex contains 11 subunits: 3 respiratory subunits (MT-CYB, CYC1 and UQCRFS1), 2 core proteins (UQCRC1 and UQCRC2) and 6 low-molecular weight proteins (UQCRH/QCR6, UQCRB/QCR7, UQCRQ/QCR8, UQCR10/QCR9, UQCR11/QCR10 and a cleavage product of UQCRFS1). This cytochrome bc1 complex then forms a dimer. It depends on heme b as a cofactor.

The protein resides in the mitochondrion inner membrane. In terms of biological role, component of the ubiquinol-cytochrome c reductase complex (complex III or cytochrome b-c1 complex) that is part of the mitochondrial respiratory chain. The b-c1 complex mediates electron transfer from ubiquinol to cytochrome c. Contributes to the generation of a proton gradient across the mitochondrial membrane that is then used for ATP synthesis. The sequence is that of Cytochrome b (MT-CYB) from Lepus arcticus (Arctic hare).